Here is a 341-residue protein sequence, read N- to C-terminus: MLVLGLETSCDETGVALYDSERGLLADALFSQIDLHRAYGGVVPELASRDHVKRMLPLIRQVLDEAGCVPTEIDAIAYTAGPGLVGALLVGASCAQALAFAWGIPALGVHHMEGHLLAPMLEKTPPQFPFVALLVSGGHTQLVQVDGIGQYTLLGESLDDAAGEAFDKTAKMMGLNYPGGPEIARLAEKGVAGRYTFPRPMCDRPGLMFSFSGLKTSALNTWQQSVSAGDDSEQARCDIALAFQQAVVETLTIKCKRALKQAGMKRLVIAGGVSANKALRTSLEKMLGDMKGDVFYARPEFCTDNGAMIAYAGCQRLQAGQHESLAISVQARWPMEQLSPL.

H111 and H115 together coordinate Fe cation. Substrate contacts are provided by residues 134–138 (LVSGG), D167, G180, and N276. D304 serves as a coordination point for Fe cation.

Belongs to the KAE1 / TsaD family. Requires Fe(2+) as cofactor.

Its subcellular location is the cytoplasm. The catalysed reaction is L-threonylcarbamoyladenylate + adenosine(37) in tRNA = N(6)-L-threonylcarbamoyladenosine(37) in tRNA + AMP + H(+). Required for the formation of a threonylcarbamoyl group on adenosine at position 37 (t(6)A37) in tRNAs that read codons beginning with adenine. Is involved in the transfer of the threonylcarbamoyl moiety of threonylcarbamoyl-AMP (TC-AMP) to the N6 group of A37, together with TsaE and TsaB. TsaD likely plays a direct catalytic role in this reaction. In Pseudomonas fluorescens (strain SBW25), this protein is tRNA N6-adenosine threonylcarbamoyltransferase.